We begin with the raw amino-acid sequence, 423 residues long: Zinc transporter ZIP13 (423 aa).

At 1–15 the chain is on the lumenal side; the sequence is MPGCPCPGIGMAGQR. The chain crosses the membrane as a helical span at residues 16-36; that stretch reads LLFLAALALELLGGAGGSQQA. Topologically, residues 37 to 68 are cytoplasmic; it reads LRSRGVAAACRLDSKESESWGALLSGERLETW. A helical membrane pass occupies residues 69–89; it reads ICSLLGSLMVGLSGVFPLLVI. The Lumenal portion of the chain corresponds to 90–108; the sequence is PLEMGTTLRSEAGARRLKQ. The helical transmembrane segment at 109–129 threads the bilayer; that stretch reads LLSFALGGLLGNVFLHLLPEA. The Cytoplasmic segment spans residues 130–149; it reads WAYTNSASSGGERQSLQQQQ. Residues 150 to 170 traverse the membrane as a helical segment; that stretch reads QLGLWVIAGFLTFLVLEKLFF. Topologically, residues 171 to 235 are lumenal; it reads DSKGKEETSQ…TIDNFTHGLA (65 aa). The helical transmembrane segment at 236–256 threads the bilayer; the sequence is VAASFLVSKKIGLLTTMAILL. The XEXPHE-motif signature appears at 257–262; sequence HEIPHE. Residues 257–278 are Cytoplasmic-facing; the sequence is HEIPHEVGDFAILLRAGFDRWS. Residues 279-299 form a helical membrane-spanning segment; the sequence is AAKLQLSTALGGLLGACFAIC. The Lumenal portion of the chain corresponds to 300 to 368; the sequence is AQSPKGVGTG…RAPPPATEET (69 aa). Residues 369-389 form a helical membrane-spanning segment; it reads VAWILPFTSGGFLYIALVNVL. At 390–401 the chain is on the cytoplasmic side; the sequence is PDLLEEDDPWRS. A helical membrane pass occupies residues 402 to 422; the sequence is LQQVLLLCAGIVVMVLFSVFV. A topological domain (lumenal) is located at residue E423.

It belongs to the ZIP transporter (TC 2.A.5) family. As to quaternary structure, homodimer.

Its subcellular location is the golgi apparatus membrane. The protein localises to the cytoplasmic vesicle membrane. It localises to the endoplasmic reticulum membrane. It carries out the reaction Zn(2+)(in) = Zn(2+)(out). Its function is as follows. Functions as a zinc transporter transporting Zn(2+) from the Golgi apparatus to the cytosol and thus influences the zinc level at least in areas of the cytosol. May regulate beige adipocyte differentiation. This is Zinc transporter ZIP13 from Bos taurus (Bovine).